Here is an 80-residue protein sequence, read N- to C-terminus: Small ribosomal subunit protein bS18 (80 aa).

This sequence belongs to the bacterial ribosomal protein bS18 family. In terms of assembly, part of the 30S ribosomal subunit. Forms a tight heterodimer with protein bS6.

In terms of biological role, binds as a heterodimer with protein bS6 to the central domain of the 16S rRNA, where it helps stabilize the platform of the 30S subunit. In Staphylococcus haemolyticus (strain JCSC1435), this protein is Small ribosomal subunit protein bS18.